We begin with the raw amino-acid sequence, 280 residues long: Phosphonoacetaldehyde hydrolase (280 aa).

Catalysis depends on D20, which acts as the Nucleophile. Mg(2+) is bound by residues D20 and A22. K61 (schiff-base intermediate with substrate) is an active-site residue. D194 contacts Mg(2+).

This sequence belongs to the HAD-like hydrolase superfamily. PhnX family. Homodimer. It depends on Mg(2+) as a cofactor.

It catalyses the reaction phosphonoacetaldehyde + H2O = acetaldehyde + phosphate + H(+). Involved in phosphonate degradation. The chain is Phosphonoacetaldehyde hydrolase from Nitratidesulfovibrio vulgaris (strain DSM 19637 / Miyazaki F) (Desulfovibrio vulgaris).